Here is a 160-residue protein sequence, read N- to C-terminus: Cytochrome b6-f complex subunit 4 (160 aa).

3 consecutive transmembrane segments (helical) span residues 36–56 (LLYIFPVVILGTIACIVGLSV), 95–115 (LLGIALQTLVPLGLMLIPFIE), and 128–148 (IAMAVFLFGTATTIYLGIGAA).

This sequence belongs to the cytochrome b family. PetD subfamily. As to quaternary structure, the 4 large subunits of the cytochrome b6-f complex are cytochrome b6, subunit IV (17 kDa polypeptide, PetD), cytochrome f and the Rieske protein, while the 4 small subunits are PetG, PetL, PetM and PetN. The complex functions as a dimer.

It localises to the cellular thylakoid membrane. Functionally, component of the cytochrome b6-f complex, which mediates electron transfer between photosystem II (PSII) and photosystem I (PSI), cyclic electron flow around PSI, and state transitions. The polypeptide is Cytochrome b6-f complex subunit 4 (Synechococcus sp. (strain CC9311)).